Here is a 515-residue protein sequence, read N- to C-terminus: Fc receptor-like protein 4 (515 aa).

The signal sequence occupies residues 1–19 (MLLWASLLAFAPVCGQSAA). Residues 20-387 (AHKPVISVHP…RETPGNRDGL (368 aa)) are Extracellular-facing. 4 consecutive Ig-like C2-type domains span residues 23–97 (PVIS…NPVR), 102–183 (SDSL…NFKI), 193–271 (PELK…GNIH), and 275–374 (PSLQ…MVLN). 4 cysteine pairs are disulfide-bonded: C44-C85, C123-C167, C212-C261, and C310-C359. An N-linked (GlcNAc...) asparagine glycan is attached at N374. Residues 388–408 (VAAGATGGLLSALLLAVALLF) form a helical membrane-spanning segment. The Cytoplasmic portion of the chain corresponds to 409–515 (HCWRRRKSGV…GKISSKDEES (107 aa)). 3 consecutive short sequence motifs (ITIM motif) follow at residues 449-454 (SLYVDV), 461-466 (LVYSEI), and 491-496 (VVYSEV). A disordered region spans residues 494–515 (SEVKTQHPDNSAGKISSKDEES).

Interacts with PTPN6 and PTPN11. Phosphorylated on cytoplasmic tyrosines upon activation. Specifically expressed by memory and monocytoid B-cells which populate spleen and lymph nodes. Preferentially expressed in memory B-cells associated with mucosal tissue (at protein level).

The protein resides in the cell membrane. Functionally, may function as an inhibitor of the B-cell receptor signaling. May function in the B-cell-mediated immune response. This chain is Fc receptor-like protein 4 (FCRL4), found in Homo sapiens (Human).